The sequence spans 137 residues: MEKKTIVLGVIGSDCHAVGNKILDHSFTAAGFNVVNIGVLSPQEDFINAAIETKADAILVSSLYGQGEIDCKGLRQKCDEAGLEGILLYVGGNIVVGKQHWPDVEKRFKDMGYDRVYAPGTPPEVGIADLKEDLNIK.

The region spanning 3–137 (KKTIVLGVIG…ADLKEDLNIK (135 aa)) is the B12-binding domain. Residues 13–17 (SDCHA), H16, 61–63 (SSL), and 93–97 (NIVVG) each bind adenosylcob(III)alamin.

This sequence belongs to the methylaspartate mutase GlmS subunit family. As to quaternary structure, heterotetramer composed of 2 epsilon subunits (GlmE) and 2 sigma subunits (GlmS). GlmE exists as a homodimer and GlmS as a monomer. It depends on adenosylcob(III)alamin as a cofactor.

It carries out the reaction (2S,3S)-3-methyl-L-aspartate = L-glutamate. It participates in amino-acid degradation; L-glutamate degradation via mesaconate pathway; acetate and pyruvate from L-glutamate: step 1/4. Functionally, catalyzes the carbon skeleton rearrangement of L-glutamate to L-threo-3-methylaspartate ((2S,3S)-3-methylaspartate). The chain is Glutamate mutase sigma subunit from Clostridium tetani (strain Massachusetts / E88).